The sequence spans 1043 residues: Isoleucine--tRNA ligase (1043 aa).

Positions 46 and 57 each coordinate L-isoleucyl-5'-AMP. The 'HIGH' region motif lies at 47 to 57 (PTANGLPHVGH). Zn(2+) is bound by residues C181 and C184. Residues H319 and D328 each coordinate L-valine. Positions 389, 392, 461, 464, 502, and 504 each coordinate Zn(2+). L-isoleucyl-5'-AMP is bound by residues E550, G551, D553, Q554, and H581. The short motif at 591–595 (KMSKS) is the 'KMSKS' region element. K594 serves as a coordination point for ATP.

It belongs to the class-I aminoacyl-tRNA synthetase family. IleS type 2 subfamily. Monomer. The cofactor is Zn(2+).

It is found in the cytoplasm. It catalyses the reaction tRNA(Ile) + L-isoleucine + ATP = L-isoleucyl-tRNA(Ile) + AMP + diphosphate. Its function is as follows. Catalyzes the attachment of isoleucine to tRNA(Ile). As IleRS can inadvertently accommodate and process structurally similar amino acids such as valine, to avoid such errors it has two additional distinct tRNA(Ile)-dependent editing activities. One activity is designated as 'pretransfer' editing and involves the hydrolysis of activated Val-AMP. The other activity is designated 'posttransfer' editing and involves deacylation of mischarged Val-tRNA(Ile). This is Isoleucine--tRNA ligase (ileS) from Thermus thermophilus (strain ATCC 27634 / DSM 579 / HB8).